The sequence spans 237 residues: uncharacterized protein (237 aa).

The chain crosses the membrane as a helical span at residues 53–70 (LIFLATVLAGLILFYFGV). The interval 85 to 155 (PPIVIKPVAP…TQEKKDVKVA (71 aa)) is disordered. Residues 98 to 157 (KTQESNQTTKKEVKQEEQKKEEPKKMVQKQETQEKREVKKSEKNEVKQTQEKKDVKVAKK) are a coiled coil. Basic and acidic residues-rich tracts occupy residues 106 to 122 (TKKEVKQEEQKKEEPKK) and 128 to 155 (ETQEKREVKKSEKNEVKQTQEKKDVKVA). Residues 165–237 (AANLRTYKFQ…HFKDAIFVRK (73 aa)) enclose the SPOR domain.

The protein localises to the membrane. This is an uncharacterized protein from Aquifex aeolicus (strain VF5).